Consider the following 88-residue polypeptide: Putative membrane protein insertion efficiency factor (88 aa).

The interval 64–88 is disordered; it reads GVDPVPKKSSSKKTSSTTACGCGHS.

Belongs to the UPF0161 family.

It is found in the cell inner membrane. Could be involved in insertion of integral membrane proteins into the membrane. This is Putative membrane protein insertion efficiency factor from Herminiimonas arsenicoxydans.